Here is a 346-residue protein sequence, read N- to C-terminus: Isopentenyl-diphosphate delta-isomerase (346 aa).

Residue 9 to 10 (RK) coordinates substrate. FMN contacts are provided by residues Ser-67, 68–70 (SMT), Ser-98, and Asn-127. 98 to 100 (SQR) contributes to the substrate binding site. Position 162 (Gln-162) interacts with substrate. Glu-163 is a Mg(2+) binding site. FMN contacts are provided by residues Lys-194, Thr-224, 274–276 (GIR), and 295–296 (AA).

Belongs to the IPP isomerase type 2 family. As to quaternary structure, homooctamer. Dimer of tetramers. FMN is required as a cofactor. It depends on NADPH as a cofactor. Requires Mg(2+) as cofactor.

It is found in the cytoplasm. The catalysed reaction is isopentenyl diphosphate = dimethylallyl diphosphate. Its function is as follows. Involved in the biosynthesis of isoprenoids. Catalyzes the 1,3-allylic rearrangement of the homoallylic substrate isopentenyl (IPP) to its allylic isomer, dimethylallyl diphosphate (DMAPP). This is Isopentenyl-diphosphate delta-isomerase from Stutzerimonas stutzeri (strain A1501) (Pseudomonas stutzeri).